The following is a 460-amino-acid chain: UDP-N-acetylmuramate--L-alanine ligase (460 aa).

Residue 118–124 (GTHGKTT) coordinates ATP.

The protein belongs to the MurCDEF family.

The protein localises to the cytoplasm. It carries out the reaction UDP-N-acetyl-alpha-D-muramate + L-alanine + ATP = UDP-N-acetyl-alpha-D-muramoyl-L-alanine + ADP + phosphate + H(+). It participates in cell wall biogenesis; peptidoglycan biosynthesis. Its function is as follows. Cell wall formation. The sequence is that of UDP-N-acetylmuramate--L-alanine ligase from Gloeobacter violaceus (strain ATCC 29082 / PCC 7421).